We begin with the raw amino-acid sequence, 240 residues long: Large ribosomal subunit protein bL25 (240 aa).

Disordered stretches follow at residues 1–20 and 220–240; these read MAEN…GPAR and PAAG…KGKK. Residues 220 to 229 are compositionally biased toward low complexity; that stretch reads PAAGAAPAKG. Residues 230-240 show a composition bias toward basic and acidic residues; sequence GEAKGGDKGKK.

This sequence belongs to the bacterial ribosomal protein bL25 family. CTC subfamily. In terms of assembly, part of the 50S ribosomal subunit; part of the 5S rRNA/L5/L18/L25 subcomplex. Contacts the 5S rRNA. Binds to the 5S rRNA independently of L5 and L18.

In terms of biological role, this is one of the proteins that binds to the 5S RNA in the ribosome where it forms part of the central protuberance. The chain is Large ribosomal subunit protein bL25 from Anaeromyxobacter dehalogenans (strain 2CP-C).